Here is a 313-residue protein sequence, read N- to C-terminus: Ribosomal RNA small subunit methyltransferase H (313 aa).

S-adenosyl-L-methionine-binding positions include 34–36 (GGH), Asp-53, Phe-80, Asp-101, and Gln-108.

The protein belongs to the methyltransferase superfamily. RsmH family.

Its subcellular location is the cytoplasm. It carries out the reaction cytidine(1402) in 16S rRNA + S-adenosyl-L-methionine = N(4)-methylcytidine(1402) in 16S rRNA + S-adenosyl-L-homocysteine + H(+). Functionally, specifically methylates the N4 position of cytidine in position 1402 (C1402) of 16S rRNA. The polypeptide is Ribosomal RNA small subunit methyltransferase H (Lacticaseibacillus casei (strain BL23) (Lactobacillus casei)).